Reading from the N-terminus, the 189-residue chain is Large ribosomal subunit protein bL9 (189 aa).

This sequence belongs to the bacterial ribosomal protein bL9 family.

Binds to the 23S rRNA. The sequence is that of Large ribosomal subunit protein bL9 from Brucella melitensis biotype 2 (strain ATCC 23457).